A 487-amino-acid polypeptide reads, in one-letter code: Histamine H1 receptor (487 aa).

Residues 1 to 29 (MSLPNSSCLLEDKMCEGNKTTMASPQLMP) are Extracellular-facing. N-linked (GlcNAc...) asparagine glycosylation is found at asparagine 5 and asparagine 18. The chain crosses the membrane as a helical span at residues 30–50 (LVVVLSTICLVTVGLNLLVLY). Over 51 to 64 (AVRSERKLHTVGNL) the chain is Cytoplasmic. The helical transmembrane segment at 65 to 89 (YIVSLSVADLIVGAVVMPMNILYLL) threads the bilayer. Over 90–97 (MSKWSLGR) the chain is Extracellular. Residues 98 to 123 (PLCLFWLSMDYVASTASIFSVFILCI) traverse the membrane as a helical segment. Cysteine 100 and cysteine 180 are oxidised to a cystine. Histamine-binding residues include aspartate 107 and threonine 112. The tract at residues 107–112 (DYVAST) is important for agonist binding. The Cytoplasmic segment spans residues 124-144 (DRYRSVQQPLRYLKYRTKTRA). 2 positions are modified to phosphothreonine: threonine 140 and threonine 142. A helical membrane pass occupies residues 145–164 (SATILGAWFLSFLWVIPILG). Over 165–188 (WNHFMQQTSVRREDKCETDFYDVT) the chain is Extracellular. A helical transmembrane segment spans residues 189–211 (WFKVMTAIINFYLPTLLMLWFYA). Asparagine 198 lines the histamine pocket. The Cytoplasmic segment spans residues 212-416 (KIYKAVRQHC…MNRERKAAKQ (205 aa)). Position 230 is a phosphoserine (serine 230). The span at 238 to 261 (KLRPENPKGDAKKPGKESPWEVLK) shows a compositional bias: basic and acidic residues. The interval 238 to 291 (KLRPENPKGDAKKPGKESPWEVLKRKPKDAGGGSVLKSPSQTPKEMKSPVVFSQ) is disordered. Position 279 is a phosphothreonine (threonine 279). Phosphoserine is present on residues serine 344 and serine 347. A disordered region spans residues 345–379 (EISEDQMLGDSQSFSRTDSDTTTETAPGKGKLRSG). Over residues 353–369 (GDSQSFSRTDSDTTTET) the composition is skewed to polar residues. Phosphoserine occurs at positions 380, 396, and 398. Residues 417-440 (LGFIMAAFILCWIPYFIFFMVIAF) traverse the membrane as a helical segment. The tract at residues 424–428 (FILCW) is important for agonist binding. Tyrosine 431 lines the histamine pocket. Cysteine 441 and cysteine 444 form a disulfide bridge. Residues 441 to 446 (CKNCCN) are Extracellular-facing. The chain crosses the membrane as a helical span at residues 447 to 469 (EHLHMFTIWLGYINSTLNPLIYP). At 470–487 (LCNENFKKTFKRILHIRS) the chain is on the cytoplasmic side.

The protein belongs to the G-protein coupled receptor 1 family. In terms of processing, phosphorylation at sites in the second and third cytoplasmic loops independently contribute to agonist-induced receptor down-regulation.

The protein resides in the cell membrane. Its function is as follows. G-protein-coupled receptor for histamine, a biogenic amine that functions as an immune modulator and a neurotransmitter. Through the H1 receptor, histamine mediates the contraction of smooth muscles and increases capillary permeability due to contraction of terminal venules. Also mediates neurotransmission in the central nervous system and thereby regulates circadian rhythms, emotional and locomotor activities as well as cognitive functions. The sequence is that of Histamine H1 receptor from Homo sapiens (Human).